The primary structure comprises 396 residues: L-lactate dehydrogenase (396 aa).

The region spanning 1–380 (MIISAASDYR…SGDSLVQELG (380 aa)) is the FMN hydroxy acid dehydrogenase domain. Tyr24 is a binding site for substrate. 2 residues coordinate FMN: Ser106 and Gln127. Tyr129 provides a ligand contact to substrate. FMN is bound at residue Thr155. Arg164 lines the substrate pocket. Lys251 provides a ligand contact to FMN. His275 functions as the Proton acceptor in the catalytic mechanism. Arg278 contacts substrate. 306–330 (DSGIRNGLDVVRMIALGADTVLLGR) contacts FMN.

This sequence belongs to the FMN-dependent alpha-hydroxy acid dehydrogenase family. FMN is required as a cofactor.

The protein resides in the cell inner membrane. It catalyses the reaction (S)-lactate + A = pyruvate + AH2. Functionally, catalyzes the conversion of L-lactate to pyruvate. Is coupled to the respiratory chain. This chain is L-lactate dehydrogenase, found in Salmonella paratyphi C (strain RKS4594).